The following is a 423-amino-acid chain: Serine hydroxymethyltransferase (423 aa).

(6S)-5,6,7,8-tetrahydrofolate contacts are provided by residues leucine 118 and 122-124 (GHL). Lysine 227 bears the N6-(pyridoxal phosphate)lysine mark. (6S)-5,6,7,8-tetrahydrofolate is bound at residue 351 to 353 (SPF).

This sequence belongs to the SHMT family. As to quaternary structure, homodimer. It depends on pyridoxal 5'-phosphate as a cofactor.

The protein resides in the cytoplasm. The enzyme catalyses (6R)-5,10-methylene-5,6,7,8-tetrahydrofolate + glycine + H2O = (6S)-5,6,7,8-tetrahydrofolate + L-serine. The protein operates within one-carbon metabolism; tetrahydrofolate interconversion. Its pathway is amino-acid biosynthesis; glycine biosynthesis; glycine from L-serine: step 1/1. Functionally, catalyzes the reversible interconversion of serine and glycine with tetrahydrofolate (THF) serving as the one-carbon carrier. This reaction serves as the major source of one-carbon groups required for the biosynthesis of purines, thymidylate, methionine, and other important biomolecules. Also exhibits THF-independent aldolase activity toward beta-hydroxyamino acids, producing glycine and aldehydes, via a retro-aldol mechanism. This is Serine hydroxymethyltransferase from Petrotoga mobilis (strain DSM 10674 / SJ95).